The sequence spans 189 residues: Peptidyl-tRNA hydrolase (189 aa).

Tyr-15 lines the tRNA pocket. The active-site Proton acceptor is His-20. TRNA is bound by residues Tyr-65, Asn-67, and Asn-113.

This sequence belongs to the PTH family. As to quaternary structure, monomer.

Its subcellular location is the cytoplasm. The catalysed reaction is an N-acyl-L-alpha-aminoacyl-tRNA + H2O = an N-acyl-L-amino acid + a tRNA + H(+). Functionally, hydrolyzes ribosome-free peptidyl-tRNAs (with 1 or more amino acids incorporated), which drop off the ribosome during protein synthesis, or as a result of ribosome stalling. In terms of biological role, catalyzes the release of premature peptidyl moieties from peptidyl-tRNA molecules trapped in stalled 50S ribosomal subunits, and thus maintains levels of free tRNAs and 50S ribosomes. The chain is Peptidyl-tRNA hydrolase from Caldicellulosiruptor saccharolyticus (strain ATCC 43494 / DSM 8903 / Tp8T 6331).